The chain runs to 938 residues: Isoleucine--tRNA ligase (938 aa).

The 'HIGH' region motif lies at 58-68 (PYANGNIHMGH). Residue E566 coordinates L-isoleucyl-5'-AMP. A 'KMSKS' region motif is present at residues 607–611 (KMSKS). Residue K610 coordinates ATP. Positions 906, 909, 926, and 929 each coordinate Zn(2+).

This sequence belongs to the class-I aminoacyl-tRNA synthetase family. IleS type 1 subfamily. As to quaternary structure, monomer. Zn(2+) is required as a cofactor.

Its subcellular location is the cytoplasm. It catalyses the reaction tRNA(Ile) + L-isoleucine + ATP = L-isoleucyl-tRNA(Ile) + AMP + diphosphate. Functionally, catalyzes the attachment of isoleucine to tRNA(Ile). As IleRS can inadvertently accommodate and process structurally similar amino acids such as valine, to avoid such errors it has two additional distinct tRNA(Ile)-dependent editing activities. One activity is designated as 'pretransfer' editing and involves the hydrolysis of activated Val-AMP. The other activity is designated 'posttransfer' editing and involves deacylation of mischarged Val-tRNA(Ile). The chain is Isoleucine--tRNA ligase from Nitratidesulfovibrio vulgaris (strain DP4) (Desulfovibrio vulgaris).